We begin with the raw amino-acid sequence, 624 residues long: Alpha-amylase 1 (624 aa).

The first 28 residues, 1–28, serve as a signal peptide directing secretion; it reads MLLINFFIAVLGVISLSPIVVARYILRR. The region spanning 40–133 is the CBM21 domain; sequence ESVTGSNHVQ…SDTSVTYTTS (94 aa). C177 and C185 form a disulfide bridge. W230 lines the substrate pocket. Ca(2+) is bound at residue N268. Position 269 (H269) interacts with substrate. Residues C297 and C311 are joined by a disulfide bond. The N-linked (GlcNAc...) asparagine glycan is linked to N304. Ca(2+)-binding residues include E309 and D322. Residue N344 is glycosylated (N-linked (GlcNAc...) asparagine). Residue R351 participates in substrate binding. Ca(2+) contacts are provided by D353, H357, and E377. D353 serves as the catalytic Nucleophile. 356–357 is a binding site for substrate; the sequence is KH. E377 functions as the Proton donor in the catalytic mechanism. G381 contributes to the substrate binding site. An intrachain disulfide couples C387 to C430. Residues D444 and R491 each coordinate substrate. A disulfide bond links C587 and C622.

This sequence belongs to the glycosyl hydrolase 13 family. Ca(2+) is required as a cofactor.

It is found in the secreted. It carries out the reaction Endohydrolysis of (1-&gt;4)-alpha-D-glucosidic linkages in polysaccharides containing three or more (1-&gt;4)-alpha-linked D-glucose units.. In Lipomyces kononenkoae (Yeast), this protein is Alpha-amylase 1 (LKA1).